The sequence spans 221 residues: Endonuclease V (221 aa).

Residues Asp-44 and Asp-112 each coordinate Mg(2+).

Belongs to the endonuclease V family. Requires Mg(2+) as cofactor.

The protein resides in the cytoplasm. The catalysed reaction is Endonucleolytic cleavage at apurinic or apyrimidinic sites to products with a 5'-phosphate.. Its function is as follows. DNA repair enzyme involved in the repair of deaminated bases. Selectively cleaves double-stranded DNA at the second phosphodiester bond 3' to a deoxyinosine leaving behind the intact lesion on the nicked DNA. This chain is Endonuclease V, found in Nostoc punctiforme (strain ATCC 29133 / PCC 73102).